The following is a 252-amino-acid chain: Phosphomannomutase (252 aa).

Catalysis depends on Asp13, which acts as the Nucleophile. 2 residues coordinate Mg(2+): Asp13 and Asp15. Residue Asp15 is the Proton donor/acceptor of the active site. Alpha-D-mannose 1-phosphate contacts are provided by Arg22, Arg124, Arg135, Arg142, Ser180, and Asp182. Residues Asp208, Tyr220, and Thr225 each coordinate Mg(2+).

The protein belongs to the eukaryotic PMM family. In terms of assembly, homodimer. It depends on Mg(2+) as a cofactor. As to expression, expressed in roots, stems, leaves, flowers and immature fruits.

It localises to the cytoplasm. The catalysed reaction is alpha-D-mannose 1-phosphate = D-mannose 6-phosphate. Its pathway is nucleotide-sugar biosynthesis; GDP-alpha-D-mannose biosynthesis; alpha-D-mannose 1-phosphate from D-fructose 6-phosphate: step 2/2. In terms of biological role, catalyzes the interconversion of mannose-6-phosphate to mannose-1-phosphate, the precursor for the synthesis of GDP-mannose. GDP-mannose is an essential sugar nucleotide for the synthesis of D-mannose-containing cell wall polysaccharides (galactomannans and glucomannans), glycolipids, glycoproteins and the antioxidant L-ascorbate. Can complement the yeast temperature-sensitive mutant sec53-6. The protein is Phosphomannomutase of Nicotiana benthamiana.